The sequence spans 367 residues: Nociceptin receptor (367 aa).

The Extracellular segment spans residues 1–45; it reads MESLFPAPYWEVLYGSHFQGNLSLLNETVPHHLLLNASHSAFLPL. Residues Asn21, Asn26, and Asn36 are each glycosylated (N-linked (GlcNAc...) asparagine). Residues 46-71 traverse the membrane as a helical segment; that stretch reads GLKVTIVGLYLAVCIGGLLGNCLVMY. At 72 to 84 the chain is on the cytoplasmic side; sequence VILRHTKMKTATN. Residues 85–106 form a helical membrane-spanning segment; sequence IYIFNLALADTLVLLTLPFQGT. Residues 107-121 are Extracellular-facing; sequence DILLGFWPFGNALCK. Residues Cys120 and Cys197 are joined by a disulfide bond. Residues 122–143 form a helical membrane-spanning segment; it reads TVIAIDYYNMFTSTFTLTAMSV. Topologically, residues 144–162 are cytoplasmic; the sequence is DRYVAICHPIRALDVRTSS. A helical transmembrane segment spans residues 163–185; that stretch reads KAQAVNVAIWALASVVGVPVAIM. The Extracellular portion of the chain corresponds to 186-208; that stretch reads GSAQVEDEEIECLVEIPAPQDYW. The helical transmembrane segment at 209 to 233 threads the bilayer; sequence GPVFAICIFLFSFIIPVLIISVCYS. Residues 234–261 lie on the Cytoplasmic side of the membrane; it reads LMIRRLRGVRLLSGSREKDRNLRRITRL. A helical membrane pass occupies residues 262–282; it reads VLVVVAVFVGCWTPVQVFVLV. Topologically, residues 283–297 are extracellular; sequence QGLGVQPGSETAVAI. Residues 298-319 form a helical membrane-spanning segment; the sequence is LRFCTALGYVNSCLNPILYAFL. Over 320–367 the chain is Cytoplasmic; sequence DENFKACFRKFCCASSLHREMQVSDRVRSIAKDVGLGCKTSETVPRPA. Cys331 is lipidated: S-palmitoyl cysteine.

It belongs to the G-protein coupled receptor 1 family. In terms of processing, phosphorylation at Ser-360 requires GRK3. In terms of tissue distribution, highly expressed in several brain areas, the intestine, liver and spleen. Detected in sympathetic stellate ganglion neurons.

It is found in the cell membrane. It localises to the cytoplasmic vesicle. Functionally, G-protein coupled opioid receptor that functions as a receptor for the endogenous neuropeptide nociceptin. Ligand binding causes a conformation change that triggers signaling via guanine nucleotide-binding proteins (G proteins) and modulates the activity of down-stream effectors. Signaling via G proteins mediates inhibition of adenylate cyclase activity and calcium channel activity. Arrestins modulate signaling via G proteins and mediate the activation of alternative signaling pathways that lead to the activation of MAP kinases. Plays a role in modulating nociception and the perception of pain. Plays a role in the regulation of locomotor activity by the neuropeptide nociceptin. The polypeptide is Nociceptin receptor (Oprl1) (Rattus norvegicus (Rat)).